Reading from the N-terminus, the 403-residue chain is Argininosuccinate synthase (403 aa).

8 to 16 serves as a coordination point for ATP; the sequence is AYSGGLDTS. Tyrosine 87 contacts L-citrulline. Glycine 117 is an ATP binding site. L-aspartate-binding residues include threonine 119, asparagine 123, and aspartate 124. Position 123 (asparagine 123) interacts with L-citrulline. Residues arginine 127, serine 175, glutamate 259, and tyrosine 271 each coordinate L-citrulline.

It belongs to the argininosuccinate synthase family. Type 1 subfamily. Homotetramer.

Its subcellular location is the cytoplasm. The catalysed reaction is L-citrulline + L-aspartate + ATP = 2-(N(omega)-L-arginino)succinate + AMP + diphosphate + H(+). Its pathway is amino-acid biosynthesis; L-arginine biosynthesis; L-arginine from L-ornithine and carbamoyl phosphate: step 2/3. The chain is Argininosuccinate synthase from Salinispora arenicola (strain CNS-205).